A 327-amino-acid polypeptide reads, in one-letter code: (-)-delta-cadinene synthase (327 aa).

5 residues coordinate Mg(2+): Asp84, Asp85, Asn222, Thr226, and Glu230.

This sequence belongs to the terpene synthase family.

The enzyme catalyses (2E,6E)-farnesyl diphosphate = (-)-delta-cadinene + diphosphate. Its function is as follows. Catalyzes the conversion of (2E,6E)-farnesyl diphosphate into (-)-delta-cadinene. Cyclization mechanism involves an intermediate nerolidyl diphosphate leading to a helminthogermacradienyl cation. The chain is (-)-delta-cadinene synthase from Streptomyces clavuligerus.